The following is a 237-amino-acid chain: Phosphoadenosine 5'-phosphosulfate reductase (237 aa).

Residue C231 is the Nucleophile; cysteine thiosulfonate intermediate of the active site.

Belongs to the PAPS reductase family. CysH subfamily.

It localises to the cytoplasm. The catalysed reaction is [thioredoxin]-disulfide + sulfite + adenosine 3',5'-bisphosphate + 2 H(+) = [thioredoxin]-dithiol + 3'-phosphoadenylyl sulfate. It participates in sulfur metabolism; hydrogen sulfide biosynthesis; sulfite from sulfate: step 3/3. In terms of biological role, catalyzes the formation of sulfite from phosphoadenosine 5'-phosphosulfate (PAPS) using thioredoxin as an electron donor. The chain is Phosphoadenosine 5'-phosphosulfate reductase from Xylella fastidiosa (strain M12).